A 194-amino-acid chain; its full sequence is Putative adenylate kinase (194 aa).

5 residues coordinate ATP: Gly16, Gly18, Lys19, Thr20, and Thr21. The tract at residues 36–59 is NMP; that stretch reads SVGELLAGTPYVTYIPELDTYEIV. The interval 108-118 is LID; it reads RRGWPLKKILD. Arg109 contacts ATP.

This sequence belongs to the adenylate kinase family. AK6 subfamily. In terms of assembly, interacts with uS11. Not a structural component of 40S pre-ribosomes, but transiently interacts with them by binding to uS11.

It catalyses the reaction AMP + ATP = 2 ADP. It carries out the reaction ATP + H2O = ADP + phosphate + H(+). Functionally, broad-specificity nucleoside monophosphate (NMP) kinase that catalyzes the reversible transfer of the terminal phosphate group between nucleoside triphosphates and monophosphates. Also has ATPase activity. Involved in the late maturation steps of the 30S ribosomal particles, specifically 16S rRNA maturation. While NMP activity is not required for ribosome maturation, ATPase activity is. Associates transiently with small ribosomal subunit protein uS11. ATP hydrolysis breaks the interaction with uS11. May temporarily remove uS11 from the ribosome to enable a conformational change of the ribosomal RNA that is needed for the final maturation step of the small ribosomal subunit. This Pyrobaculum aerophilum (strain ATCC 51768 / DSM 7523 / JCM 9630 / CIP 104966 / NBRC 100827 / IM2) protein is Putative adenylate kinase.